The chain runs to 335 residues: Methyltransferase pgmE (335 aa).

Belongs to the methyltransferase superfamily.

It functions in the pathway pigment biosynthesis. It participates in secondary metabolite biosynthesis. Methyltransferase; part of the gene cluster that mediates the biosynthesis of pleosporalin A, ascomycone A, as well as a third cryptic naphthoquinone derived pigment, all responsible for the coloration of conidia. Essential for the production of pleosporalin A, but not the 2 other final products. The pathway begins with the biosynthesis of the cyclized heptaketide 3-acetonyl-1,6,8-trihydroxy-2-naphthaldehyde by the NR-PKS pgmA. The C-6 hydroxyl group is further methylated by the O-methyltransferase pgmB to yield fusarubinaldehyde which is in turn oxidized by the cytochrome P450 monooxygenase pgmC at C-9. The C-1 hydroxyl group is then methylated spontaneously. Although pgmE, pgmD and pgmH are essential for the production of pleosporalin A, it is not the case for the 2 other final products and it remains difficult to assign a specific function to each enzyme. PgmF and pgmG seem not to be involved in pigment biosynthesis although they were regulated by the cluster-specific transcription factor pgmR. The protein is Methyltransferase pgmE of Aspergillus terreus (strain NIH 2624 / FGSC A1156).